Here is a 359-residue protein sequence, read N- to C-terminus: 3-isopropylmalate dehydrogenase (359 aa).

Residue 76-89 (GPKWDTIERSIRPE) coordinates NAD(+). Residues R96, R106, R134, and D225 each contribute to the substrate site. The Mg(2+) site is built by D225, D249, and D253. 283-295 (GSAPDIAGQNVAN) provides a ligand contact to NAD(+).

It belongs to the isocitrate and isopropylmalate dehydrogenases family. LeuB type 1 subfamily. In terms of assembly, homodimer. Requires Mg(2+) as cofactor. Mn(2+) is required as a cofactor.

The protein localises to the cytoplasm. The catalysed reaction is (2R,3S)-3-isopropylmalate + NAD(+) = 4-methyl-2-oxopentanoate + CO2 + NADH. Its pathway is amino-acid biosynthesis; L-leucine biosynthesis; L-leucine from 3-methyl-2-oxobutanoate: step 3/4. Its function is as follows. Catalyzes the oxidation of 3-carboxy-2-hydroxy-4-methylpentanoate (3-isopropylmalate) to 3-carboxy-4-methyl-2-oxopentanoate. The product decarboxylates to 4-methyl-2 oxopentanoate. The sequence is that of 3-isopropylmalate dehydrogenase from Acinetobacter baylyi (strain ATCC 33305 / BD413 / ADP1).